The sequence spans 382 residues: Porphobilinogen deaminase, chloroplastic (382 aa).

Residues 1–62 constitute a chloroplast transit peptide; the sequence is MDIASSSLSQ…KQSSSGFVKA (62 aa). 2 residues coordinate dipyrromethane: Arg80 and Ser82. Ser123 is modified (phosphoserine). Dipyrromethane-binding positions include 156–157, 200–206, and 223–229; these read KD, TASLRRK, and RGNVQTR. Asp157 acts as the Proton donor/acceptor in catalysis. Cys316 carries the S-(dipyrrolylmethanemethyl)cysteine modification.

The protein belongs to the HMBS family. As to quaternary structure, monomer. Dipyrromethane serves as cofactor.

It localises to the plastid. It is found in the chloroplast. The catalysed reaction is 4 porphobilinogen + H2O = hydroxymethylbilane + 4 NH4(+). It functions in the pathway porphyrin-containing compound metabolism; protoporphyrin-IX biosynthesis; coproporphyrinogen-III from 5-aminolevulinate: step 2/4. It participates in porphyrin-containing compound metabolism; chlorophyll biosynthesis. Inhibited by NH(3), heavy-metal ions, hydroxylamine and 2-bromoporphobilinogen. Not inhibited by N-ethylmaleimide. Its function is as follows. Tetrapolymerization of the monopyrrole PBG into the hydroxymethylbilane pre-uroporphyrinogen in several discrete steps. The chain is Porphobilinogen deaminase, chloroplastic (HEMC) from Arabidopsis thaliana (Mouse-ear cress).